Consider the following 89-residue polypeptide: Small ribosomal subunit protein uS15 (89 aa).

Belongs to the universal ribosomal protein uS15 family. As to quaternary structure, part of the 30S ribosomal subunit. Forms a bridge to the 50S subunit in the 70S ribosome, contacting the 23S rRNA.

One of the primary rRNA binding proteins, it binds directly to 16S rRNA where it helps nucleate assembly of the platform of the 30S subunit by binding and bridging several RNA helices of the 16S rRNA. Functionally, forms an intersubunit bridge (bridge B4) with the 23S rRNA of the 50S subunit in the ribosome. The chain is Small ribosomal subunit protein uS15 from Synechocystis sp. (strain ATCC 27184 / PCC 6803 / Kazusa).